Reading from the N-terminus, the 243-residue chain is 2-C-methyl-D-erythritol 4-phosphate cytidylyltransferase (243 aa).

This sequence belongs to the IspD/TarI cytidylyltransferase family. IspD subfamily.

The catalysed reaction is 2-C-methyl-D-erythritol 4-phosphate + CTP + H(+) = 4-CDP-2-C-methyl-D-erythritol + diphosphate. The protein operates within isoprenoid biosynthesis; isopentenyl diphosphate biosynthesis via DXP pathway; isopentenyl diphosphate from 1-deoxy-D-xylulose 5-phosphate: step 2/6. Catalyzes the formation of 4-diphosphocytidyl-2-C-methyl-D-erythritol from CTP and 2-C-methyl-D-erythritol 4-phosphate (MEP). The chain is 2-C-methyl-D-erythritol 4-phosphate cytidylyltransferase from Chlorobium phaeovibrioides (strain DSM 265 / 1930) (Prosthecochloris vibrioformis (strain DSM 265)).